A 790-amino-acid chain; its full sequence is GATOR2 complex protein WDR24 (790 aa).

6 WD repeats span residues 72-112 (SLNL…RNKQ), 118-158 (EHKR…SVST), 161-201 (GQSE…RCER), 205-245 (AHNG…AKEM), 249-291 (QTIA…VPAA), and 295-338 (EHRD…VERA). S155 carries the phosphoserine; by AMPK modification. S470 and S496 each carry phosphoserine. A Phosphothreonine modification is found at T581. 2 positions are modified to phosphoserine: S594 and S598. The C4-type zinc finger occupies 718–740 (NCSHCKRPMSSRGWVCDRCHRCA). The Zn(2+) site is built by C719, C722, C733, C736, C743, C746, C757, C760, H762, H765, H768, C779, C783, H785, and C787. An RING-type; atypical zinc finger spans residues 741-790 (SMCAVCHHVVKGLFVWCQGCSHGGHLQHIMKWLEGSSHCPAGCGHLCEYS).

This sequence belongs to the WD repeat WDR24 family. Component of the GATOR2 subcomplex, composed of MIOS, SEC13, SEH1L, WDR24 and WDR59. The GATOR2 complex interacts with CASTOR1 and CASTOR2; the interaction is negatively regulated by arginine. The GATOR2 complex interacts with SESN1, SESN2 and SESN3; the interaction is negatively regulated by amino acids. SESN1, SESN2 and SESN3 convey leucine availability via direct interaction with SEH1L and WDR24. In terms of processing, phosphorylation at Ser-155 by AMPK in response to glucose deprivation inactivates WDR24 by promoting interaction with 14-3-3 proteins, such as YWHAG, preventing assembly of the GATOR2 complex. Autoubiquitinated; MIOS is required to prevent autoubiquitination.

It is found in the lysosome membrane. It carries out the reaction S-ubiquitinyl-[E2 ubiquitin-conjugating enzyme]-L-cysteine + [acceptor protein]-L-lysine = [E2 ubiquitin-conjugating enzyme]-L-cysteine + N(6)-ubiquitinyl-[acceptor protein]-L-lysine.. It functions in the pathway protein modification; protein ubiquitination. With respect to regulation, the GATOR2 complex is negatively regulated by the upstream amino acid sensors CASTOR1 and SESN2, which sequester the GATOR2 complex in absence of amino acids. In the presence of abundant amino acids, GATOR2 is released from CASTOR1 and SESN2 and activated. Catalytic component of the GATOR2 complex, a multiprotein complex that acts as an activator of the amino acid-sensing branch of the mTORC1 signaling pathway. The GATOR2 complex indirectly activates mTORC1 through the inhibition of the GATOR1 subcomplex. GATOR2 probably acts as an E3 ubiquitin-protein ligase toward GATOR1. In the presence of abundant amino acids, the GATOR2 complex mediates ubiquitination of the NPRL2 core component of the GATOR1 complex, leading to GATOR1 inactivation. In the absence of amino acids, GATOR2 is inhibited, activating the GATOR1 complex. In addition to its role in regulation of the mTORC1 complex, promotes the acidification of lysosomes and facilitates autophagic flux. Within the GATOR2 complex, WDR24 constitutes the catalytic subunit that mediates 'Lys-6'-linked ubiquitination of NPRL2. The chain is GATOR2 complex protein WDR24 from Homo sapiens (Human).